The sequence spans 139 residues: Small ribosomal subunit protein uS12 (139 aa).

The protein belongs to the universal ribosomal protein uS12 family. Part of the 30S ribosomal subunit. Contacts proteins S8 and S17. May interact with IF1 in the 30S initiation complex.

With S4 and S5 plays an important role in translational accuracy. In terms of biological role, interacts with and stabilizes bases of the 16S rRNA that are involved in tRNA selection in the A site and with the mRNA backbone. Located at the interface of the 30S and 50S subunits, it traverses the body of the 30S subunit contacting proteins on the other side and probably holding the rRNA structure together. The combined cluster of proteins S8, S12 and S17 appears to hold together the shoulder and platform of the 30S subunit. In Mycoplasma pneumoniae (strain ATCC 29342 / M129 / Subtype 1) (Mycoplasmoides pneumoniae), this protein is Small ribosomal subunit protein uS12.